A 347-amino-acid chain; its full sequence is Very-long-chain 3-oxoacyl-CoA reductase (347 aa).

Residues 22 to 42 (LLWSIFGFGVLKATTLILRIM) form a helical membrane-spanning segment. 7 residues coordinate NADP(+): valine 68, aspartate 122, asparagine 149, tyrosine 223, lysine 227, valine 256, and serine 258. The active-site Proton donor is the tyrosine 223. Catalysis depends on lysine 227, which acts as the Lowers pKa of active site Tyr.

The protein belongs to the short-chain dehydrogenases/reductases (SDR) family.

The protein resides in the endoplasmic reticulum membrane. The enzyme catalyses a very-long-chain (3R)-3-hydroxyacyl-CoA + NADP(+) = a very-long-chain 3-oxoacyl-CoA + NADPH + H(+). The protein operates within lipid metabolism; fatty acid biosynthesis. In terms of biological role, component of the microsomal membrane bound fatty acid elongation system, which produces the 26-carbon very long-chain fatty acids (VLCFA) from palmitate. Catalyzes the reduction of the 3-ketoacyl-CoA intermediate that is formed in each cycle of fatty acid elongation. VLCFAs serve as precursors for ceramide and sphingolipids. This chain is Very-long-chain 3-oxoacyl-CoA reductase, found in Vanderwaltozyma polyspora (strain ATCC 22028 / DSM 70294 / BCRC 21397 / CBS 2163 / NBRC 10782 / NRRL Y-8283 / UCD 57-17) (Kluyveromyces polysporus).